The chain runs to 183 residues: ATP synthase subunit delta (183 aa).

This sequence belongs to the ATPase delta chain family. In terms of assembly, F-type ATPases have 2 components, F(1) - the catalytic core - and F(0) - the membrane proton channel. F(1) has five subunits: alpha(3), beta(3), gamma(1), delta(1), epsilon(1). F(0) has three main subunits: a(1), b(2) and c(10-14). The alpha and beta chains form an alternating ring which encloses part of the gamma chain. F(1) is attached to F(0) by a central stalk formed by the gamma and epsilon chains, while a peripheral stalk is formed by the delta and b chains.

The protein localises to the cell inner membrane. Its function is as follows. F(1)F(0) ATP synthase produces ATP from ADP in the presence of a proton or sodium gradient. F-type ATPases consist of two structural domains, F(1) containing the extramembraneous catalytic core and F(0) containing the membrane proton channel, linked together by a central stalk and a peripheral stalk. During catalysis, ATP synthesis in the catalytic domain of F(1) is coupled via a rotary mechanism of the central stalk subunits to proton translocation. Functionally, this protein is part of the stalk that links CF(0) to CF(1). It either transmits conformational changes from CF(0) to CF(1) or is implicated in proton conduction. This is ATP synthase subunit delta from Oleidesulfovibrio alaskensis (strain ATCC BAA-1058 / DSM 17464 / G20) (Desulfovibrio alaskensis).